The primary structure comprises 207 residues: MIRVAIPTGRMLEQALDFLRNFDDRLLDEEKGRKLRIHGERFEVFLAKPWDLPLYVEERVVDLGIIGRDVIWEQEKNVVNLISLPFGYCKMVIAGYPYVSLKGNGKEIRIATKYENITKKLLENRWGKIKIIKLNGSVELGPILNISDLIVDIVETGKTLRDNGLEVKEVLFESSACLISNVVSFAYLRKEILSFVKEVRKLNDKCN.

It belongs to the ATP phosphoribosyltransferase family. Short subfamily. In terms of assembly, heteromultimer composed of HisG and HisZ subunits.

It is found in the cytoplasm. The catalysed reaction is 1-(5-phospho-beta-D-ribosyl)-ATP + diphosphate = 5-phospho-alpha-D-ribose 1-diphosphate + ATP. The protein operates within amino-acid biosynthesis; L-histidine biosynthesis; L-histidine from 5-phospho-alpha-D-ribose 1-diphosphate: step 1/9. Functionally, catalyzes the condensation of ATP and 5-phosphoribose 1-diphosphate to form N'-(5'-phosphoribosyl)-ATP (PR-ATP). Has a crucial role in the pathway because the rate of histidine biosynthesis seems to be controlled primarily by regulation of HisG enzymatic activity. The polypeptide is ATP phosphoribosyltransferase (hisG) (Dictyoglomus turgidum (strain DSM 6724 / Z-1310)).